The sequence spans 215 residues: uncharacterized protein (215 aa).

Its subcellular location is the mitochondrion. This is an uncharacterized protein from Arabidopsis thaliana (Mouse-ear cress).